A 1485-amino-acid chain; its full sequence is Chromosome partition protein MukB (1485 aa).

ATP is bound at residue 34–41; the sequence is GGNGAGKS. Coiled-coil stretches lie at residues 311–480 and 519–665; these read EMAR…EAYR and GARL…RLSQ. The interval 666-783 is flexible hinge; the sequence is PGGAEDARLI…SLPLFGRAAR (118 aa). Coiled coils occupy residues 832–1115 and 1209–1265; these read NDPE…QAKA and IDAI…LQSV.

This sequence belongs to the SMC family. MukB subfamily. In terms of assembly, homodimerization via its hinge domain. Binds to DNA via its C-terminal region. Interacts, and probably forms a ternary complex, with MukE and MukF via its C-terminal region. The complex formation is stimulated by calcium or magnesium. Interacts with tubulin-related protein FtsZ.

Its subcellular location is the cytoplasm. It is found in the nucleoid. Functionally, plays a central role in chromosome condensation, segregation and cell cycle progression. Functions as a homodimer, which is essential for chromosome partition. Involved in negative DNA supercoiling in vivo, and by this means organize and compact chromosomes. May achieve or facilitate chromosome segregation by condensation DNA from both sides of a centrally located replisome during cell division. The protein is Chromosome partition protein MukB of Edwardsiella ictaluri (strain 93-146).